Consider the following 166-residue polypeptide: MARYEDLPYRSCVGMMLLNPKGLVFIGRRVGGTELIDPAHVWQMPQGGIDPGEDYWEAAQRELLEETNARSIEKLAEATDWFTYDIPRMIAGRSWKGRYRGQRQKWFAIRFTGDDSEINVASPAGHKAEFVDWRWEPMQNLPNLVVPFKRPVYERVVKEFSRFAGE.

One can recognise a Nudix hydrolase domain in the interval 8–158; it reads PYRSCVGMML…KRPVYERVVK (151 aa). Residues 47 to 68 carry the Nudix box motif; the sequence is GGIDPGEDYWEAAQRELLEETN.

Belongs to the Nudix hydrolase family. RppH subfamily. Requires a divalent metal cation as cofactor.

Functionally, accelerates the degradation of transcripts by removing pyrophosphate from the 5'-end of triphosphorylated RNA, leading to a more labile monophosphorylated state that can stimulate subsequent ribonuclease cleavage. The chain is RNA pyrophosphohydrolase from Afipia carboxidovorans (strain ATCC 49405 / DSM 1227 / KCTC 32145 / OM5) (Oligotropha carboxidovorans).